The following is a 173-amino-acid chain: Transcription factor E (173 aa).

The HTH TFE/IIEalpha-type domain occupies 9 to 92 (NNPATRAYIH…LWQLRIDLLY (84 aa)).

Belongs to the TFE family. In terms of assembly, monomer. Interaction with RNA polymerase subunits RpoF and RpoE is necessary for Tfe stimulatory transcription activity. Able to interact with Tbp and RNA polymerase in the absence of DNA promoter. Interacts both with the preinitiation and elongation complexes.

In terms of biological role, transcription factor that plays a role in the activation of archaeal genes transcribed by RNA polymerase. Facilitates transcription initiation by enhancing TATA-box recognition by TATA-box-binding protein (Tbp), and transcription factor B (Tfb) and RNA polymerase recruitment. Not absolutely required for transcription in vitro, but particularly important in cases where Tbp or Tfb function is not optimal. It dynamically alters the nucleic acid-binding properties of RNA polymerases by stabilizing the initiation complex and destabilizing elongation complexes. Seems to translocate with the RNA polymerase following initiation and acts by binding to the non template strand of the transcription bubble in elongation complexes. This is Transcription factor E from Methanoregula boonei (strain DSM 21154 / JCM 14090 / 6A8).